Reading from the N-terminus, the 265-residue chain is Transcriptional activator TAF-1 (265 aa).

2 disordered regions span residues 1–133 (AHGG…SEKA) and 167–218 (THLK…KQAE). Positions 35–46 (ASLSLDASAKSS) are enriched in low complexity. 2 stretches are compositionally biased toward basic and acidic residues: residues 103–115 (RETTPDNSGDSKS) and 191–209 (NERELKREKRKQSNRESAR). Residues 194-257 (ELKREKRKQS…EKLKLENAAL (64 aa)) enclose the bZIP domain. Residues 196–215 (KREKRKQSNRESARRSRLRK) are basic motif. Positions 222–257 (LAIRVQSLTAENMTLKSEINKLMENSEKLKLENAAL) are leucine-zipper.

This sequence belongs to the bZIP family. Present mainly in roots. Barely detectable in stems and leaves.

It is found in the nucleus. In terms of biological role, trans-activator of a beta-glucuronidase (GUS) reporter gene. Binds to a G-box-related element, (5'-GCAACGTGGC-3'). Also binds to the HEX-motif of wheat histone H3 promoter. The chain is Transcriptional activator TAF-1 (TAF1) from Nicotiana tabacum (Common tobacco).